Consider the following 422-residue polypeptide: Adenylosuccinate synthetase (422 aa).

GTP is bound by residues 12–18 and 40–42; these read GDEGKGK and GHT. Residue D13 is the Proton acceptor of the active site. Mg(2+) contacts are provided by D13 and G40. Residues 13–16, 38–41, T129, R143, N221, T236, and R300 contribute to the IMP site; these read DEGK and NAGH. H41 (proton donor) is an active-site residue. A substrate-binding site is contributed by 296–302; sequence VTTGRKR. GTP contacts are provided by residues R302, 328 to 330, and 410 to 412; these read KLD and GVG.

This sequence belongs to the adenylosuccinate synthetase family. As to quaternary structure, homodimer. Requires Mg(2+) as cofactor.

The protein localises to the cytoplasm. The enzyme catalyses IMP + L-aspartate + GTP = N(6)-(1,2-dicarboxyethyl)-AMP + GDP + phosphate + 2 H(+). Its pathway is purine metabolism; AMP biosynthesis via de novo pathway; AMP from IMP: step 1/2. Plays an important role in the de novo pathway and in the salvage pathway of purine nucleotide biosynthesis. Catalyzes the first committed step in the biosynthesis of AMP from IMP. The chain is Adenylosuccinate synthetase from Pyrenophora tritici-repentis (strain Pt-1C-BFP) (Wheat tan spot fungus).